A 639-amino-acid polypeptide reads, in one-letter code: Chaperone protein HtpG (639 aa).

The interval 1 to 347 (MSQQETHGFQ…SNDLPLNVSR (347 aa)) is a; substrate-binding. The tract at residues 348–564 (EILQDNKVTT…EGEMSTQMIK (217 aa)) is b. A c region spans residues 565-639 (LMQAAGQDVP…MNQMLLASVK (75 aa)).

It belongs to the heat shock protein 90 family. In terms of assembly, homodimer.

It localises to the cytoplasm. Its function is as follows. Molecular chaperone. Has ATPase activity. The chain is Chaperone protein HtpG from Shewanella halifaxensis (strain HAW-EB4).